A 1151-amino-acid chain; its full sequence is Cation channel sperm-associated protein subunit gamma 1 (1151 aa).

Positions 1 to 38 are cleaved as a signal peptide; that stretch reads MVSRPAMSPVSPVWPRKPNLWAFWVLRLVLLLSLKSWA. Residues 39-1063 are Extracellular-facing; sequence EDTLQHCTWL…GLPLSSKRSS (1025 aa). A glycan (N-linked (GlcNAc...) asparagine) is linked at asparagine 356. Residues 1064-1084 traverse the membrane as a helical segment; it reads FIVMVSTSFFIALVVFYILFC. Residues 1085–1151 lie on the Cytoplasmic side of the membrane; sequence LVWPHIVKAW…NVQAKRAKVA (67 aa). A compositionally biased stretch (low complexity) spans 1113–1123; it reads SSSSGGFTLHS. Positions 1113–1151 are disordered; it reads SSSSGGFTLHSHSSEGSFEGPSRPGTKEDNVQAKRAKVA.

It belongs to the CATSPERG family.

The protein localises to the membrane. The chain is Cation channel sperm-associated protein subunit gamma 1 (Catsperg1) from Mus musculus (Mouse).